The primary structure comprises 190 residues: Probable DNA replication complex GINS protein PSF2 (190 aa).

This sequence belongs to the GINS2/PSF2 family. Component of the GINS complex which is a heterotetramer of gins1, gins2, gins3 and gins4.

The protein localises to the nucleus. In terms of biological role, the GINS complex plays an essential role in the initiation of DNA replication. The protein is Probable DNA replication complex GINS protein PSF2 of Brugia malayi (Filarial nematode worm).